The sequence spans 179 residues: Bifunctional protein PyrR (179 aa).

The short motif at 100 to 112 (VILVDDVLFTGRT) is the PRPP-binding element.

Belongs to the purine/pyrimidine phosphoribosyltransferase family. PyrR subfamily. In terms of assembly, homodimer and homohexamer; in equilibrium.

It catalyses the reaction UMP + diphosphate = 5-phospho-alpha-D-ribose 1-diphosphate + uracil. Regulates transcriptional attenuation of the pyrimidine nucleotide (pyr) operon by binding in a uridine-dependent manner to specific sites on pyr mRNA. This disrupts an antiterminator hairpin in the RNA and favors formation of a downstream transcription terminator, leading to a reduced expression of downstream genes. Its function is as follows. Also displays a weak uracil phosphoribosyltransferase activity which is not physiologically significant. This is Bifunctional protein PyrR from Geobacillus sp. (strain WCH70).